The sequence spans 476 residues: Amidophosphoribosyltransferase (476 aa).

Residues M1–E11 constitute a propeptide that is removed on maturation. C12 serves as the catalytic Nucleophile. Positions C12–E231 constitute a Glutamine amidotransferase type-2 domain. Position 247 (C247) interacts with [4Fe-4S] cluster. Residues S294, D356, and D357 each contribute to the Mg(2+) site. 3 residues coordinate [4Fe-4S] cluster: C393, C448, and C451.

This sequence in the C-terminal section; belongs to the purine/pyrimidine phosphoribosyltransferase family. Homotetramer. Mg(2+) serves as cofactor. Requires [4Fe-4S] cluster as cofactor.

It catalyses the reaction 5-phospho-beta-D-ribosylamine + L-glutamate + diphosphate = 5-phospho-alpha-D-ribose 1-diphosphate + L-glutamine + H2O. It functions in the pathway purine metabolism; IMP biosynthesis via de novo pathway; N(1)-(5-phospho-D-ribosyl)glycinamide from 5-phospho-alpha-D-ribose 1-diphosphate: step 1/2. Allosterically regulated; subject to end product regulation by purine nucleotides. Its function is as follows. Catalyzes the formation of phosphoribosylamine from phosphoribosylpyrophosphate (PRPP) and glutamine. The chain is Amidophosphoribosyltransferase from Bacillus subtilis (strain 168).